Reading from the N-terminus, the 459-residue chain is Glutamate--isopropylamine ligase (459 aa).

The GS beta-grasp domain maps to His-19–Gly-115. One can recognise a GS catalytic domain in the interval Pro-122–Ile-459.

It belongs to the glutamine synthetase family.

The enzyme catalyses isopropylamine + L-glutamate + ATP = gamma-L-glutamyl-isopropylamide + ADP + phosphate + H(+). Involved in the degradation of isopropylamine, which is a constituent of the herbicides atrazine. Catalyzes the ATP-dependent formation of gamma-glutamyl-isopropylamide from isopropylamine and L-glutamate. It can also use aminoalkanes, amino-alcohols (L-alaninol and D-alaninol) and amino-esters as substrates. The chain is Glutamate--isopropylamine ligase (ipuC) from Pseudomonas sp.